A 271-amino-acid polypeptide reads, in one-letter code: Orotidine 5'-phosphate decarboxylase (271 aa).

Lys-95 functions as the Proton donor in the catalytic mechanism.

This sequence belongs to the OMP decarboxylase family. Type 2 subfamily.

The catalysed reaction is orotidine 5'-phosphate + H(+) = UMP + CO2. The protein operates within pyrimidine metabolism; UMP biosynthesis via de novo pathway; UMP from orotate: step 2/2. In Ralstonia pickettii (strain 12J), this protein is Orotidine 5'-phosphate decarboxylase.